Consider the following 69-residue polypeptide: uncharacterized protein (69 aa).

Positions 1–16 are cleaved as a signal peptide; that stretch reads MKKIMLFLAMTSILSA. Cysteine 17 is lipidated: N-palmitoyl cysteine. The S-diacylglycerol cysteine moiety is linked to residue cysteine 17.

The protein localises to the cell membrane. This is an uncharacterized protein from Bacillus subtilis (strain 168).